A 337-amino-acid polypeptide reads, in one-letter code: Mannan polymerase complex subunit mnn9 (337 aa).

Residues 1–8 (MRVYNKSR) are Cytoplasmic-facing. The chain crosses the membrane as a helical; Signal-anchor for type II membrane protein span at residues 9 to 29 (IVGQLLFVALGITFIYYLFTP). The Lumenal segment spans residues 30–337 (SVNSNAKVQI…PYYLVFHHNE (308 aa)).

The protein belongs to the ANP1/MMN9/VAN1 family.

Its subcellular location is the endoplasmic reticulum membrane. It is found in the golgi apparatus membrane. It functions in the pathway protein modification; protein glycosylation. Functionally, required for the addition of the long alpha 1,6-mannose backbone of N-linked glycans on cell wall and periplasmic proteins. This is Mannan polymerase complex subunit mnn9 from Schizosaccharomyces pombe (strain 972 / ATCC 24843) (Fission yeast).